The sequence spans 1243 residues: Tau-tubulin kinase 2 (1243 aa).

One can recognise a Protein kinase domain in the interval 21-284 (WKVLRKIGGG…LLTSVFDNSI (264 aa)). Residues 27 to 35 (IGGGGFGEI) and Lys50 contribute to the ATP site. Asp141 (proton acceptor) is an active-site residue. At Ser445 the chain carries Phosphoserine. The span at 674 to 683 (VASTQSTSGS) shows a compositional bias: polar residues. 2 disordered regions span residues 674 to 695 (VAST…KKDL) and 737 to 761 (TGHD…DPPD). The residue at position 786 (Ser786) is a Phosphoserine. The segment at 1063-1086 (QINGSASPQFLPRPPPGKPPVRPG) is disordered. Over residues 1073–1084 (LPRPPPGKPPVR) the composition is skewed to pro residues. Residue Ser1102 is modified to Phosphoserine. Residues 1115–1129 (QNGSQKSRSTTQCKS) show a composition bias toward polar residues. Positions 1115–1243 (QNGSQKSRST…KSKPASKLSR (129 aa)) are disordered. Composition is skewed to low complexity over residues 1144–1170 (VVPR…PSRA), 1187–1202 (SKSP…SRRS), and 1227–1243 (SSKT…KLSR).

Belongs to the protein kinase superfamily. CK1 Ser/Thr protein kinase family. In terms of assembly, interacts with CEP164. Interacts with MCRS1; the interaction is required for recruitment of TTBK2 to the mother centriole.

Its subcellular location is the cell projection. The protein localises to the cilium. It localises to the cytoplasm. It is found in the cytoskeleton. The protein resides in the cilium basal body. Its subcellular location is the microtubule organizing center. The protein localises to the centrosome. It localises to the centriole. It is found in the cytosol. The protein resides in the nucleus. It catalyses the reaction L-seryl-[protein] + ATP = O-phospho-L-seryl-[protein] + ADP + H(+). The catalysed reaction is L-threonyl-[protein] + ATP = O-phospho-L-threonyl-[protein] + ADP + H(+). In terms of biological role, serine/threonine kinase that acts as a key regulator of ciliogenesis: controls the initiation of ciliogenesis by binding to the distal end of the basal body and promoting the removal of CCP110, which caps the mother centriole, leading to the recruitment of IFT proteins, which build the ciliary axoneme. Has some substrate preference for proteins that are already phosphorylated on a Tyr residue at the +2 position relative to the phosphorylation site. Able to phosphorylate tau on serines in vitro. Phosphorylates MPHOSPH9 which promotes its ubiquitination and proteasomal degradation, loss of MPHOSPH9 facilitates the removal of the CP110-CEP97 complex (a negative regulator of ciliogenesis) from the mother centrioles, promoting the initiation of ciliogenesis. Required for recruitment of CPLANE2 and INTU to the mother centriole. The protein is Tau-tubulin kinase 2 (Ttbk2) of Mus musculus (Mouse).